The chain runs to 1848 residues: Chitin synthase E (1848 aa).

A compositionally biased stretch (low complexity) spans 1–17 (MAAPSPAGGAPSHAQSS). The tract at residues 1 to 22 (MAAPSPAGGAPSHAQSSLPSLP) is disordered. The region spanning 1-779 (MAAPSPAGGA…CWADLAKVGE (779 aa)) is the Myosin motor domain. Residue 102 to 109 (GESGSGKT) coordinates ATP. The disordered stretch occupies residues 593 to 621 (SSKPLRMPSMARRKTSPSSRLAFDAGDAD). Residues 659 to 683 (LDIVNKCLSSTNLNPYFIFCLKPND) are actin-binding. The next 2 membrane-spanning stretches (helical) occupy residues 889–909 (WIALVYLLTFYIPDFAIKLFG) and 928–948 (LIIWFSCGVAIFFIVAFPGLV). The 89-residue stretch at 952–1040 (QHVYSAAELS…LLDYRPTNIS (89 aa)) folds into the Cytochrome b5 heme-binding domain. N1038 and N1063 each carry an N-linked (GlcNAc...) asparagine glycan. Residues 1200-1220 (FILAISVLICSIIVFKFLAAL) form a helical membrane-spanning segment. N1423, N1457, and N1563 each carry an N-linked (GlcNAc...) asparagine glycan. 3 helical membrane-spanning segments follow: residues 1595 to 1615 (LSTVIQPVTLAYIIYLIYWLV), 1621 to 1641 (IPYTSLILLAAIYGLQALIFI), and 1648 to 1668 (MVGWMIVYLLALPVFSLALPL). A glycan (N-linked (GlcNAc...) asparagine) is linked at N1786. The DEK-C domain occupies 1790–1845 (LPSDDAILAEIREILRTADLMSVTKKSIKLELERRFGVNLDLKRPYINSATEAVLA).

The protein in the N-terminal section; belongs to the TRAFAC class myosin-kinesin ATPase superfamily. Myosin family. It in the C-terminal section; belongs to the chitin synthase family. Class V subfamily.

The protein resides in the cell membrane. It localises to the cell septum. Its subcellular location is the cell tip. The enzyme catalyses [(1-&gt;4)-N-acetyl-beta-D-glucosaminyl](n) + UDP-N-acetyl-alpha-D-glucosamine = [(1-&gt;4)-N-acetyl-beta-D-glucosaminyl](n+1) + UDP + H(+). Its function is as follows. Polymerizes chitin, a structural polymer of the cell wall and septum, by transferring the sugar moiety of UDP-GlcNAc to the non-reducing end of the growing chitin polymer. Important for hyphal growth and conidiophore development but not pathogenicity. This chain is Chitin synthase E, found in Aspergillus fumigatus (strain ATCC MYA-4609 / CBS 101355 / FGSC A1100 / Af293) (Neosartorya fumigata).